The sequence spans 128 residues: Transmembrane protein 234 homolog (128 aa).

Helical transmembrane passes span 3–23 (TYNI…NPLI), 53–73 (PSYT…FYTL), 80–100 (LVVP…GMLL), and 104–124 (VLHF…TICV).

Belongs to the TMEM234 family.

It localises to the membrane. The chain is Transmembrane protein 234 homolog from Dictyostelium discoideum (Social amoeba).